Reading from the N-terminus, the 758-residue chain is 5-methyltetrahydropteroyltriglutamate--homocysteine methyltransferase (758 aa).

Residues 17 to 20 and Lys-117 each bind 5-methyltetrahydropteroyltri-L-glutamate; that span reads RELK. Residues 434 to 436 and Glu-487 contribute to the L-homocysteine site; that span reads IGS. Residues 434–436 and Glu-487 each bind L-methionine; that span reads IGS. 5-methyltetrahydropteroyltri-L-glutamate is bound by residues 518 to 519 and Trp-564; that span reads RC. Asp-602 contacts L-homocysteine. Asp-602 serves as a coordination point for L-methionine. Residue Glu-608 coordinates 5-methyltetrahydropteroyltri-L-glutamate. The Zn(2+) site is built by His-644, Cys-646, and Glu-668. His-697 acts as the Proton donor in catalysis. Cys-729 lines the Zn(2+) pocket.

It belongs to the vitamin-B12 independent methionine synthase family. Zn(2+) serves as cofactor.

It carries out the reaction 5-methyltetrahydropteroyltri-L-glutamate + L-homocysteine = tetrahydropteroyltri-L-glutamate + L-methionine. The protein operates within amino-acid biosynthesis; L-methionine biosynthesis via de novo pathway; L-methionine from L-homocysteine (MetE route): step 1/1. In terms of biological role, catalyzes the transfer of a methyl group from 5-methyltetrahydrofolate to homocysteine resulting in methionine formation. This is 5-methyltetrahydropteroyltriglutamate--homocysteine methyltransferase from Serratia proteamaculans (strain 568).